A 640-amino-acid chain; its full sequence is 1-deoxy-D-xylulose-5-phosphate synthase (640 aa).

Thiamine diphosphate-binding positions include His-79 and Gly-120–Ser-122. Asp-151 is a binding site for Mg(2+). Residues Gly-152–Gly-153, Asn-180, Tyr-288, and Glu-372 contribute to the thiamine diphosphate site. Asn-180 lines the Mg(2+) pocket.

The protein belongs to the transketolase family. DXPS subfamily. Homodimer. Mg(2+) serves as cofactor. It depends on thiamine diphosphate as a cofactor.

The catalysed reaction is D-glyceraldehyde 3-phosphate + pyruvate + H(+) = 1-deoxy-D-xylulose 5-phosphate + CO2. The protein operates within metabolic intermediate biosynthesis; 1-deoxy-D-xylulose 5-phosphate biosynthesis; 1-deoxy-D-xylulose 5-phosphate from D-glyceraldehyde 3-phosphate and pyruvate: step 1/1. Catalyzes the acyloin condensation reaction between C atoms 2 and 3 of pyruvate and glyceraldehyde 3-phosphate to yield 1-deoxy-D-xylulose-5-phosphate (DXP). The protein is 1-deoxy-D-xylulose-5-phosphate synthase of Nitrosococcus oceani (strain ATCC 19707 / BCRC 17464 / JCM 30415 / NCIMB 11848 / C-107).